Reading from the N-terminus, the 101-residue chain is NAD(P)H-quinone oxidoreductase subunit 4L, chloroplastic (101 aa).

The next 3 membrane-spanning stretches (helical) occupy residues 2–22 (IFQS…YGLL), 32–52 (MSLE…SNFV), and 61–81 (VLAL…LAII).

The protein belongs to the complex I subunit 4L family. In terms of assembly, NDH is composed of at least 16 different subunits, 5 of which are encoded in the nucleus.

The protein localises to the plastid. The protein resides in the chloroplast thylakoid membrane. It catalyses the reaction a plastoquinone + NADH + (n+1) H(+)(in) = a plastoquinol + NAD(+) + n H(+)(out). It carries out the reaction a plastoquinone + NADPH + (n+1) H(+)(in) = a plastoquinol + NADP(+) + n H(+)(out). Functionally, NDH shuttles electrons from NAD(P)H:plastoquinone, via FMN and iron-sulfur (Fe-S) centers, to quinones in the photosynthetic chain and possibly in a chloroplast respiratory chain. The immediate electron acceptor for the enzyme in this species is believed to be plastoquinone. Couples the redox reaction to proton translocation, and thus conserves the redox energy in a proton gradient. The chain is NAD(P)H-quinone oxidoreductase subunit 4L, chloroplastic from Nephroselmis olivacea (Green alga).